A 246-amino-acid polypeptide reads, in one-letter code: tRNA (guanine-N(1)-)-methyltransferase (246 aa).

S-adenosyl-L-methionine-binding positions include Gly-114 and 134–139 (IGDYIL).

This sequence belongs to the RNA methyltransferase TrmD family. As to quaternary structure, homodimer.

The protein localises to the cytoplasm. It carries out the reaction guanosine(37) in tRNA + S-adenosyl-L-methionine = N(1)-methylguanosine(37) in tRNA + S-adenosyl-L-homocysteine + H(+). Its function is as follows. Specifically methylates guanosine-37 in various tRNAs. This chain is tRNA (guanine-N(1)-)-methyltransferase, found in Coxiella burnetii (strain CbuG_Q212) (Coxiella burnetii (strain Q212)).